Consider the following 418-residue polypeptide: Magnesium transporter MRS2-E (418 aa).

The disordered stretch occupies residues 119-146 (DAAPSTNPAAADRGNGTEQGDQGSVPGL). Positions 166–232 (VCLEHACKDL…RDELEHLLDD (67 aa)) form a coiled coil. Residues 258–268 (DSHKYASVDHD) are compositionally biased toward basic and acidic residues. Residues 258–287 (DSHKYASVDHDDDREEEDHDDETESGRESS) form a disordered region. The segment covering 269–280 (DDREEEDHDDET) has biased composition (acidic residues). Residues 344 to 364 (GVMLTTATVVVTAGIVVVSLF) traverse the membrane as a helical segment. Positions 365–367 (GMN) match the Required for magnesium transport activity motif. Residues 389–409 (FWETTFGTVAGCIAIYLLAIY) form a helical membrane-spanning segment.

This sequence belongs to the CorA metal ion transporter (MIT) (TC 1.A.35.5) family.

It localises to the membrane. Functionally, magnesium transporter that may mediate the influx of magnesium. The protein is Magnesium transporter MRS2-E (MRS2-E) of Oryza sativa subsp. indica (Rice).